Consider the following 82-residue polypeptide: ATP synthase subunit c (82 aa).

2 helical membrane-spanning segments follow: residues 3–23 and 57–77; these read PLVA…ASLG and LAFM…LLFA.

The protein belongs to the ATPase C chain family. As to quaternary structure, F-type ATPases have 2 components, F(1) - the catalytic core - and F(0) - the membrane proton channel. F(1) has five subunits: alpha(3), beta(3), gamma(1), delta(1), epsilon(1). F(0) has four main subunits: a(1), b(1), b'(1) and c(10-14). The alpha and beta chains form an alternating ring which encloses part of the gamma chain. F(1) is attached to F(0) by a central stalk formed by the gamma and epsilon chains, while a peripheral stalk is formed by the delta, b and b' chains.

The protein localises to the cellular thylakoid membrane. Functionally, f(1)F(0) ATP synthase produces ATP from ADP in the presence of a proton or sodium gradient. F-type ATPases consist of two structural domains, F(1) containing the extramembraneous catalytic core and F(0) containing the membrane proton channel, linked together by a central stalk and a peripheral stalk. During catalysis, ATP synthesis in the catalytic domain of F(1) is coupled via a rotary mechanism of the central stalk subunits to proton translocation. Key component of the F(0) channel; it plays a direct role in translocation across the membrane. A homomeric c-ring of between 10-14 subunits forms the central stalk rotor element with the F(1) delta and epsilon subunits. The chain is ATP synthase subunit c from Synechococcus sp. (strain PCC 6716).